The primary structure comprises 350 residues: N-acetyl-gamma-glutamyl-phosphate reductase (350 aa).

Residue Cys-154 is part of the active site.

The protein belongs to the NAGSA dehydrogenase family. Type 1 subfamily.

Its subcellular location is the cytoplasm. The enzyme catalyses N-acetyl-L-glutamate 5-semialdehyde + phosphate + NADP(+) = N-acetyl-L-glutamyl 5-phosphate + NADPH + H(+). The protein operates within amino-acid biosynthesis; L-arginine biosynthesis; N(2)-acetyl-L-ornithine from L-glutamate: step 3/4. Catalyzes the NADPH-dependent reduction of N-acetyl-5-glutamyl phosphate to yield N-acetyl-L-glutamate 5-semialdehyde. The polypeptide is N-acetyl-gamma-glutamyl-phosphate reductase (Corynebacterium efficiens (strain DSM 44549 / YS-314 / AJ 12310 / JCM 11189 / NBRC 100395)).